Reading from the N-terminus, the 339-residue chain is Glycerol-3-phosphate dehydrogenase [NAD(P)+] (339 aa).

Residues Ser-13, Trp-14, and Lys-108 each coordinate NADPH. Sn-glycerol 3-phosphate is bound by residues Lys-108, Gly-139, and Ser-141. An NADPH-binding site is contributed by Ala-143. Lys-194, Asp-247, Ser-257, Arg-258, and Asn-259 together coordinate sn-glycerol 3-phosphate. Lys-194 (proton acceptor) is an active-site residue. Arg-258 is an NADPH binding site. The NADPH site is built by Val-282 and Glu-284.

It belongs to the NAD-dependent glycerol-3-phosphate dehydrogenase family.

Its subcellular location is the cytoplasm. It carries out the reaction sn-glycerol 3-phosphate + NAD(+) = dihydroxyacetone phosphate + NADH + H(+). The catalysed reaction is sn-glycerol 3-phosphate + NADP(+) = dihydroxyacetone phosphate + NADPH + H(+). It functions in the pathway membrane lipid metabolism; glycerophospholipid metabolism. Functionally, catalyzes the reduction of the glycolytic intermediate dihydroxyacetone phosphate (DHAP) to sn-glycerol 3-phosphate (G3P), the key precursor for phospholipid synthesis. In Streptococcus equi subsp. zooepidemicus (strain H70), this protein is Glycerol-3-phosphate dehydrogenase [NAD(P)+].